The sequence spans 827 residues: MFKPVDFSETSPVPPDIDLAPTQSPHHVAPSQDSSYDLLSRSSDDKIDAEKGPHDELSKHLPLFQKRPLSDTPISSNWNSPGITEENTPSDSPENSATNLKSLHRLHINDETQLKNAKIPTNDTTDYMPPSDGANEVTRIDLKDIKSPTRHHKRRPTTIDVPGLTKSKTSPDGLISKEDSGSKLVIVMVGLPATGKSFITNKLSRFLNYSLYYCKVFNVGNTRRKFAKEHGLKDQDSKFFEPKNADSTRLRDKWAMDTLDELLDYLLEGSGSVGIFDATNTSRERRKNVLARIRKRSPHLKVLFLESVCSDHALVQKNIRLKLFGPDYKGKDPESSLKDFKSRLANYLKAYEPIEDDENLQYIKMIDVGKKVIAYNIQGFLASQTVYYLLNFNLADRQIWITRSGESEDNVSGRIGGNSHLTPRGLRFAKSLPKFIARQREIFYQNLMQQKKNNENTDGNIYNDFFVWTSMRARTIGTAQYFNEDDYPIKQMKMLDELSAGDYDGMTYPEIKNNFPEEFEKRQKDKLRYRYPGIGGESYMDVINRLRPVITELERIEDNVLIITHRVVARALLGYFMNLSMGIIANLDVPLHCVYCLEPKPYGITWSLWEYDEASDSFSKVPQTDLNTTRVKEVGLVYNERRYSVIPTAPPSARSSFASDFLSRKRSNPTSASSSQSELSEQPKNSVSAQTGSNNTTLIGSNFNIKNENGDSRIPLSAPLMATNTSNNILDGGGTSISIHRPRVVPNQNNVNPLLANNNKAASNVPNVKKSAATPRQIFEIDKVDEKLSMLKNKSFLLHGKDYPNNADNNDNEDIRAKTMNRSQSHV.

Disordered regions lie at residues 1-97 (MFKP…ENSA) and 149-175 (TRHHKRRPTTIDVPGLTKSKTSPDGLI). A compositionally biased stretch (low complexity) spans 31–41 (SQDSSYDLLSR). The segment covering 42–59 (SSDDKIDAEKGPHDELSK) has biased composition (basic and acidic residues). The segment covering 72–97 (TPISSNWNSPGITEENTPSDSPENSA) has biased composition (polar residues). Serine 92 is subject to Phosphoserine. Threonine 157 is modified (phosphothreonine). 190 to 197 (GLPATGKS) lines the ATP pocket. Residues aspartate 277 and cysteine 309 contribute to the active site. Arginine 343 contributes to the beta-D-fructose 6-phosphate binding site. Catalysis depends on serine 404, which acts as the Phosphoserine intermediate. The active site involves glutamate 497. Histidine 565 (proton donor) is an active-site residue. 4 positions are modified to phosphoserine: serine 644, serine 652, serine 659, and serine 667. Disordered stretches follow at residues 649 to 704 (APPS…SNFN) and 799 to 827 (HGKDYPNNADNNDNEDIRAKTMNRSQSHV). The segment covering 671–682 (SASSSQSELSEQ) has biased composition (low complexity). The segment covering 683-704 (PKNSVSAQTGSNNTTLIGSNFN) has biased composition (polar residues).

It catalyses the reaction beta-D-fructose 6-phosphate + ATP = beta-D-fructose 2,6-bisphosphate + ADP + H(+). Phosphorylation results in the activation of the kinase activity. Its function is as follows. Synthesis of fructose 2,6-bisphosphate. The chain is 6-phosphofructo-2-kinase 1 (PFK26) from Saccharomyces cerevisiae (strain ATCC 204508 / S288c) (Baker's yeast).